A 277-amino-acid chain; its full sequence is Large ribosomal subunit protein uL2c (277 aa).

A disordered region spans residues Asn-226–Pro-249. A compositionally biased stretch (basic and acidic residues) spans Asp-229–Pro-246.

Belongs to the universal ribosomal protein uL2 family. As to quaternary structure, part of the 50S ribosomal subunit.

The protein resides in the plastid. It is found in the chloroplast. The polypeptide is Large ribosomal subunit protein uL2c (rpl2) (Physcomitrium patens (Spreading-leaved earth moss)).